The chain runs to 142 residues: Large ribosomal subunit protein uL11 (142 aa).

Belongs to the universal ribosomal protein uL11 family. Part of the ribosomal stalk of the 50S ribosomal subunit. Interacts with L10 and the large rRNA to form the base of the stalk. L10 forms an elongated spine to which L12 dimers bind in a sequential fashion forming a multimeric L10(L12)X complex. One or more lysine residues are methylated.

In terms of biological role, forms part of the ribosomal stalk which helps the ribosome interact with GTP-bound translation factors. The polypeptide is Large ribosomal subunit protein uL11 (Serratia proteamaculans (strain 568)).